The following is a 140-amino-acid chain: Large ribosomal subunit protein uL14 (140 aa).

The protein belongs to the universal ribosomal protein uL14 family.

This chain is Large ribosomal subunit protein uL14 (rpl-23), found in Caenorhabditis elegans.